The chain runs to 66 residues: UPF0337 protein spyM18_1212 (66 aa).

It belongs to the UPF0337 (CsbD) family.

The chain is UPF0337 protein spyM18_1212 from Streptococcus pyogenes serotype M18 (strain MGAS8232).